Reading from the N-terminus, the 124-residue chain is Small ribosomal subunit protein uS12 (124 aa).

D89 carries the post-translational modification 3-methylthioaspartic acid.

This sequence belongs to the universal ribosomal protein uS12 family. Part of the 30S ribosomal subunit. Contacts proteins S8 and S17. May interact with IF1 in the 30S initiation complex.

With S4 and S5 plays an important role in translational accuracy. Functionally, interacts with and stabilizes bases of the 16S rRNA that are involved in tRNA selection in the A site and with the mRNA backbone. Located at the interface of the 30S and 50S subunits, it traverses the body of the 30S subunit contacting proteins on the other side and probably holding the rRNA structure together. The combined cluster of proteins S8, S12 and S17 appears to hold together the shoulder and platform of the 30S subunit. The protein is Small ribosomal subunit protein uS12 of Erwinia tasmaniensis (strain DSM 17950 / CFBP 7177 / CIP 109463 / NCPPB 4357 / Et1/99).